Consider the following 156-residue polypeptide: Small ribosomal subunit protein uS7 (156 aa).

Belongs to the universal ribosomal protein uS7 family. In terms of assembly, part of the 30S ribosomal subunit. Contacts proteins S9 and S11.

One of the primary rRNA binding proteins, it binds directly to 16S rRNA where it nucleates assembly of the head domain of the 30S subunit. Is located at the subunit interface close to the decoding center, probably blocks exit of the E-site tRNA. The polypeptide is Small ribosomal subunit protein uS7 (Xanthobacter autotrophicus (strain ATCC BAA-1158 / Py2)).